We begin with the raw amino-acid sequence, 343 residues long: Glucokinase (343 aa).

18-23 (GDIGGT) contacts ATP.

The protein belongs to the bacterial glucokinase family.

It is found in the cytoplasm. It carries out the reaction D-glucose + ATP = D-glucose 6-phosphate + ADP + H(+). In Brucella suis biovar 1 (strain 1330), this protein is Glucokinase.